The chain runs to 467 residues: Uronate isomerase (467 aa).

This sequence belongs to the metallo-dependent hydrolases superfamily. Uronate isomerase family.

It catalyses the reaction D-glucuronate = D-fructuronate. It carries out the reaction aldehydo-D-galacturonate = keto-D-tagaturonate. It functions in the pathway carbohydrate metabolism; pentose and glucuronate interconversion. This is Uronate isomerase from Mannheimia succiniciproducens (strain KCTC 0769BP / MBEL55E).